A 284-amino-acid chain; its full sequence is Tryptophan 2,3-dioxygenase (284 aa).

Substrate-binding positions include 51–55 (FIIQH), Y113, and R117. Heme is bound at residue H240. T254 is a substrate binding site.

It belongs to the tryptophan 2,3-dioxygenase family. In terms of assembly, homotetramer. It depends on heme as a cofactor.

It catalyses the reaction L-tryptophan + O2 = N-formyl-L-kynurenine. It functions in the pathway amino-acid degradation; L-tryptophan degradation via kynurenine pathway; L-kynurenine from L-tryptophan: step 1/2. Heme-dependent dioxygenase that catalyzes the oxidative cleavage of the L-tryptophan (L-Trp) pyrrole ring and converts L-tryptophan to N-formyl-L-kynurenine. Catalyzes the oxidative cleavage of the indole moiety. The sequence is that of Tryptophan 2,3-dioxygenase from Arthrobacter sp. (strain FB24).